Consider the following 37-residue polypeptide: Cytochrome b6-f complex subunit 5 (37 aa).

A helical transmembrane segment spans residues 5-25; it reads LLSGIVLGLIVVTLAGLFYAA.

Belongs to the PetG family. In terms of assembly, the 4 large subunits of the cytochrome b6-f complex are cytochrome b6, subunit IV (17 kDa polypeptide, PetD), cytochrome f and the Rieske protein, while the 4 small subunits are PetG, PetL, PetM and PetN. The complex functions as a dimer.

It is found in the cellular thylakoid membrane. Component of the cytochrome b6-f complex, which mediates electron transfer between photosystem II (PSII) and photosystem I (PSI), cyclic electron flow around PSI, and state transitions. PetG is required for either the stability or assembly of the cytochrome b6-f complex. This Anabaena variabilis protein is Cytochrome b6-f complex subunit 5.